Here is a 607-residue protein sequence, read N- to C-terminus: Guanine nucleotide-binding protein-like 1 (607 aa).

A compositionally biased stretch (basic residues) spans 1-14 (MPRKKPFSVKQKKK). The tract at residues 1–81 (MPRKKPFSVK…GPRGYDPNRY (81 aa)) is disordered. Positions 15–26 (QLQDKRERKRGL) are enriched in basic and acidic residues. Phosphoserine occurs at positions 32, 33, and 34. Phosphothreonine occurs at positions 48 and 50. 2 positions are modified to phosphoserine: S51 and S68. In terms of domain architecture, CP-type G spans 178 to 418 (WRQLWRVLEM…LCDCPGLIFP (241 aa)). 225-228 (NKVD) contributes to the GTP binding site. Phosphoserine is present on S324. GTP contacts are provided by residues 367-374 (GFPNVGKS) and 411-415 (DCPGL). The disordered stretch occupies residues 544–607 (GRVGPAGDEE…PYALLGEDEC (64 aa)). A compositionally biased stretch (acidic residues) spans 550–585 (GDEEEEEEEELSSSCEEEGEEDRDADEEGEGDEDTP). Phosphoserine occurs at positions 561, 562, and 563.

Belongs to the TRAFAC class YlqF/YawG GTPase family.

Functionally, possible regulatory or functional link with the histocompatibility cluster. This chain is Guanine nucleotide-binding protein-like 1 (Gnl1), found in Mus musculus (Mouse).